The chain runs to 72 residues: MIIPWQQLEPETLLNLIESFVLREGTDYGEDEKSLEQKVANIRHQLERGDVMLVWSELHESVNIVPKEMFHS.

Belongs to the UPF0270 family.

This chain is UPF0270 protein plu0398, found in Photorhabdus laumondii subsp. laumondii (strain DSM 15139 / CIP 105565 / TT01) (Photorhabdus luminescens subsp. laumondii).